Reading from the N-terminus, the 590-residue chain is Beta-(1--&gt;2)glucan export ATP-binding/permease protein NdvA (590 aa).

Residues 21 to 301 form the ABC transmembrane type-1 domain; sequence VALICGANVA…MSAFANQISE (281 aa). 6 consecutive transmembrane segments (helical) span residues 22–42, 55–75, 136–156, 158–178, 248–268, and 275–295; these read ALIC…PIMF, VFST…AFVL, QHLS…SMDV, MSMV…LVMK, LSST…VTHG, and VIAF…MSAF. Residues 335 to 569 form the ABC transporter domain; sequence VRFEDVGFEF…NGRFASLLRA (235 aa). 368-375 is an ATP binding site; the sequence is GPTGAGKT.

The protein belongs to the ABC transporter superfamily. Beta-(1--&gt;2)glucan exporter (TC 3.A.1.108.1) family. Homodimer.

It is found in the cell inner membrane. It catalyses the reaction [(1-&gt;2)-beta-D-glucosyl](n)(in) + ATP + H2O = [(1-&gt;2)-beta-D-glucosyl](n)(out) + ADP + phosphate + H(+). Involved in beta-(1--&gt;2)glucan export. Transmembrane domains (TMD) form a pore in the inner membrane and the ATP-binding domain (NBD) is responsible for energy generation. This chain is Beta-(1--&gt;2)glucan export ATP-binding/permease protein NdvA, found in Mesorhizobium japonicum (strain LMG 29417 / CECT 9101 / MAFF 303099) (Mesorhizobium loti (strain MAFF 303099)).